Here is a 239-residue protein sequence, read N- to C-terminus: Eukaryotic translation initiation factor 6 (239 aa).

Belongs to the eIF-6 family. In terms of assembly, monomer. Associates with the 60S ribosomal subunit.

It is found in the cytoplasm. The protein localises to the nucleus. The protein resides in the nucleolus. In terms of biological role, binds to the 60S ribosomal subunit and prevents its association with the 40S ribosomal subunit to form the 80S initiation complex in the cytoplasm. May also be involved in ribosome biogenesis. The chain is Eukaryotic translation initiation factor 6 from Entamoeba dispar (strain ATCC PRA-260 / SAW760).